The primary structure comprises 380 residues: Ribosomal RNA small subunit methyltransferase, mitochondrial (380 aa).

Residues 1 to 26 constitute a mitochondrion transit peptide; the sequence is MILRLKDQTLIKINSTRSYLSSLVFR. S-adenosyl-L-methionine is bound by residues His70, Leu72, Gly97, Glu118, Asp146, and Asn161.

It belongs to the class I-like SAM-binding methyltransferase superfamily. rRNA adenine N(6)-methyltransferase family.

The protein localises to the mitochondrion. It catalyses the reaction adenosine(1914)/adenosine(1915) in 18S rRNA + 4 S-adenosyl-L-methionine = N(6)-dimethyladenosine(1914)/N(6)-dimethyladenosine(1915) in 18S rRNA + 4 S-adenosyl-L-homocysteine + 4 H(+). Its function is as follows. N6-adenine methyltransferase which modifies the AA dinucleotide at the plant mitochondrial 18S rRNA nucleotides A1914 and A1915. Not active as mitochondrial transcription factor. The polypeptide is Ribosomal RNA small subunit methyltransferase, mitochondrial (Arabidopsis thaliana (Mouse-ear cress)).